The sequence spans 359 residues: tRNA N6-adenosine threonylcarbamoyltransferase (359 aa).

Residues His-115 and His-119 each coordinate Fe cation. Residues 137–141 (LVSGG), Asp-170, Gly-183, and Asn-283 each bind substrate. Asp-311 lines the Fe cation pocket. A disordered region spans residues 328–359 (APDSLDIAPRSRWPLDEKSAPVFGTGRRGAKA).

This sequence belongs to the KAE1 / TsaD family. The cofactor is Fe(2+).

Its subcellular location is the cytoplasm. The enzyme catalyses L-threonylcarbamoyladenylate + adenosine(37) in tRNA = N(6)-L-threonylcarbamoyladenosine(37) in tRNA + AMP + H(+). In terms of biological role, required for the formation of a threonylcarbamoyl group on adenosine at position 37 (t(6)A37) in tRNAs that read codons beginning with adenine. Is involved in the transfer of the threonylcarbamoyl moiety of threonylcarbamoyl-AMP (TC-AMP) to the N6 group of A37, together with TsaE and TsaB. TsaD likely plays a direct catalytic role in this reaction. The protein is tRNA N6-adenosine threonylcarbamoyltransferase of Brucella canis (strain ATCC 23365 / NCTC 10854 / RM-666).